Here is a 368-residue protein sequence, read N- to C-terminus: MQNPREGMDLPQVIFSLVFIFIMIISSLWIMRPFFLGFAWASMVVVATWPIFLKLQILLWGNRACAVVMMTFSLLLVFIIPIVCLVNSLIDNSTSVISWLSSDKFRFPSLEWLQDIPIIGIKLFSSYQKLLNEGGAELITKVQPYMGKTTEFFVIQAGHFGRFILHLIFMLIFSALLYWNGEKVQSVIRHFAIRLGSKSGDSVVLLAGQAIRAVALGVVVTALVQGILSGIGLAISGIPYSSLLMMLIIIFCLVQLGPLPVLIPAIIWLYWNGKTTWGTVLLIWSCVVCILDHILRPILIRIGVDLPTVLILSGVIGGLIAFGMIGLFIGPVVLIISYRLISSWMDEIPAPNSLSKKSVQQLLFKKKN.

A run of 8 helical transmembrane segments spans residues 13–35, 39–61, 68–90, 159–181, 216–238, 248–270, 277–299, and 314–336; these read VIFS…RPFF, AWAS…LLWG, VMMT…NSLI, HFGR…YWNG, LGVV…ISGI, IIIF…IWLY, WGTV…RPIL, and GVIG…VLII.

Belongs to the autoinducer-2 exporter (AI-2E) (TC 2.A.86) family.

Its subcellular location is the cell membrane. The sequence is that of Putative transport protein bbp_117 from Buchnera aphidicola subsp. Baizongia pistaciae (strain Bp).